A 332-amino-acid polypeptide reads, in one-letter code: 4-hydroxy-3-methylbut-2-enyl diphosphate reductase (332 aa).

Cysteine 13 contacts [4Fe-4S] cluster. Residues histidine 41 and histidine 75 each contribute to the (2E)-4-hydroxy-3-methylbut-2-enyl diphosphate site. Histidine 41 and histidine 75 together coordinate dimethylallyl diphosphate. Isopentenyl diphosphate-binding residues include histidine 41 and histidine 75. A [4Fe-4S] cluster-binding site is contributed by cysteine 97. Histidine 125 contacts (2E)-4-hydroxy-3-methylbut-2-enyl diphosphate. Histidine 125 serves as a coordination point for dimethylallyl diphosphate. Histidine 125 is a binding site for isopentenyl diphosphate. The active-site Proton donor is the glutamate 127. Threonine 168 contacts (2E)-4-hydroxy-3-methylbut-2-enyl diphosphate. Position 229 (cysteine 229) interacts with [4Fe-4S] cluster. (2E)-4-hydroxy-3-methylbut-2-enyl diphosphate is bound by residues serine 257, serine 258, asparagine 259, and serine 306. Residues serine 257, serine 258, asparagine 259, and serine 306 each coordinate dimethylallyl diphosphate. 4 residues coordinate isopentenyl diphosphate: serine 257, serine 258, asparagine 259, and serine 306.

This sequence belongs to the IspH family. [4Fe-4S] cluster is required as a cofactor.

It carries out the reaction isopentenyl diphosphate + 2 oxidized [2Fe-2S]-[ferredoxin] + H2O = (2E)-4-hydroxy-3-methylbut-2-enyl diphosphate + 2 reduced [2Fe-2S]-[ferredoxin] + 2 H(+). The catalysed reaction is dimethylallyl diphosphate + 2 oxidized [2Fe-2S]-[ferredoxin] + H2O = (2E)-4-hydroxy-3-methylbut-2-enyl diphosphate + 2 reduced [2Fe-2S]-[ferredoxin] + 2 H(+). The protein operates within isoprenoid biosynthesis; dimethylallyl diphosphate biosynthesis; dimethylallyl diphosphate from (2E)-4-hydroxy-3-methylbutenyl diphosphate: step 1/1. It participates in isoprenoid biosynthesis; isopentenyl diphosphate biosynthesis via DXP pathway; isopentenyl diphosphate from 1-deoxy-D-xylulose 5-phosphate: step 6/6. Catalyzes the conversion of 1-hydroxy-2-methyl-2-(E)-butenyl 4-diphosphate (HMBPP) into a mixture of isopentenyl diphosphate (IPP) and dimethylallyl diphosphate (DMAPP). Acts in the terminal step of the DOXP/MEP pathway for isoprenoid precursor biosynthesis. This is 4-hydroxy-3-methylbut-2-enyl diphosphate reductase from Chlorobaculum tepidum (strain ATCC 49652 / DSM 12025 / NBRC 103806 / TLS) (Chlorobium tepidum).